Here is a 457-residue protein sequence, read N- to C-terminus: Chromosomal replication initiator protein DnaA (457 aa).

The segment at 1–77 (MDTNNNIEKE…EILSQNKVGM (77 aa)) is domain I, interacts with DnaA modulators. The interval 77–108 (MHLAHSVDVRIEVAPKIQVNAQSNINYKATKT) is domain II. The tract at residues 109-323 (SVKDSYTFEN…GAIIKISVNA (215 aa)) is domain III, AAA+ region. The ATP site is built by Gly153, Gly155, Lys156, and Thr157. The segment at 324–457 (NLMNATIDLN…DKKTAFNSSE (134 aa)) is domain IV, binds dsDNA.

The protein belongs to the DnaA family. In terms of assembly, oligomerizes as a right-handed, spiral filament on DNA at oriC.

Its subcellular location is the cytoplasm. In terms of biological role, plays an essential role in the initiation and regulation of chromosomal replication. ATP-DnaA binds to the origin of replication (oriC) to initiate formation of the DNA replication initiation complex once per cell cycle. Binds the DnaA box (a 9 base pair repeat at the origin) and separates the double-stranded (ds)DNA. Forms a right-handed helical filament on oriC DNA; dsDNA binds to the exterior of the filament while single-stranded (ss)DNA is stabiized in the filament's interior. The ATP-DnaA-oriC complex binds and stabilizes one strand of the AT-rich DNA unwinding element (DUE), permitting loading of DNA polymerase. After initiation quickly degrades to an ADP-DnaA complex that is not apt for DNA replication. Binds acidic phospholipids. This chain is Chromosomal replication initiator protein DnaA, found in Helicobacter pylori (strain J99 / ATCC 700824) (Campylobacter pylori J99).